The following is a 318-amino-acid chain: 2-keto-3-deoxygluconate permease (318 aa).

Transmembrane regions (helical) follow at residues 10-30, 42-62, 82-102, 109-129, 139-159, 163-183, 194-214, 224-244, 257-277, and 289-309; these read LPGGMMLVPLLLGAVCHTLWP, GLISGTVPILAVWFFCMGATI, IAMAWLVAVLCAPLLPIGGVP, LSVLALVAAMDMTNGGLYAAL, AGAVVLMSLESGPLISMLILG, LASFDPLLFVGAVLPLLLGFA, FFAQATTTLVPFFGFALGNTL, ASGVLLGVAVIVITGLPLLLA, VAASSTAGAAVATPALIAGMA, and ALVASAVIVTSLLVPLLTALY.

The protein belongs to the KdgT transporter family.

It is found in the cell inner membrane. The catalysed reaction is 2-dehydro-3-deoxy-D-gluconate(in) + H(+)(in) = 2-dehydro-3-deoxy-D-gluconate(out) + H(+)(out). Functionally, catalyzes the proton-dependent uptake of 2-keto-3-deoxygluconate (KDG) into the cell. This Xanthomonas euvesicatoria pv. vesicatoria (strain 85-10) (Xanthomonas campestris pv. vesicatoria) protein is 2-keto-3-deoxygluconate permease.